The sequence spans 395 residues: Chorismate synthase (395 aa).

Residues Arg40 and Arg46 each contribute to the NADP(+) site. FMN is bound by residues 137 to 139 (RSS), Gly308, 323 to 327 (KPLPT), and Arg349.

The protein belongs to the chorismate synthase family. Homotetramer. The cofactor is FMNH2.

It carries out the reaction 5-O-(1-carboxyvinyl)-3-phosphoshikimate = chorismate + phosphate. It functions in the pathway metabolic intermediate biosynthesis; chorismate biosynthesis; chorismate from D-erythrose 4-phosphate and phosphoenolpyruvate: step 7/7. Its function is as follows. Catalyzes the anti-1,4-elimination of the C-3 phosphate and the C-6 proR hydrogen from 5-enolpyruvylshikimate-3-phosphate (EPSP) to yield chorismate, which is the branch point compound that serves as the starting substrate for the three terminal pathways of aromatic amino acid biosynthesis. This reaction introduces a second double bond into the aromatic ring system. This chain is Chorismate synthase, found in Gloeobacter violaceus (strain ATCC 29082 / PCC 7421).